The following is a 244-amino-acid chain: Venom nerve growth factor 2 (244 aa).

A signal peptide spans 1 to 18 (MSMLCYTLIIAFLIGIWA). Residues 19–125 (APKSEDNVPL…TLNRNIRAKR (107 aa)) constitute a propeptide that is removed on maturation. Basic and acidic residues predominate over residues 47 to 66 (GLKTSRNTDQRHPAPKKAED). The tract at residues 47-69 (GLKTSRNTDQRHPAPKKAEDQEL) is disordered. Intrachain disulfides connect cysteine 139–cysteine 205 and cysteine 181–cysteine 233.

Belongs to the NGF-beta family. Homodimer; non-covalently linked. In terms of tissue distribution, expressed by the venom gland.

The protein resides in the secreted. Functionally, nerve growth factor is important for the development and maintenance of the sympathetic and sensory nervous systems. It stimulates division and differentiation of sympathetic and embryonic sensory neurons as well as basal forebrain cholinergic neurons in the brain. Its relevance in the snake venom is not clear. However, it has been shown to inhibit metalloproteinase-dependent proteolysis of platelet glycoprotein Ib alpha, suggesting a metalloproteinase inhibition to prevent metalloprotease autodigestion and/or protection against prey proteases. Binds a lipid between the two protein chains in the homodimer. The lipid-bound form promotes histamine relase from mouse mast cells, contrary to the lipid-free form. This Notechis scutatus scutatus (Mainland tiger snake) protein is Venom nerve growth factor 2.